A 78-amino-acid chain; its full sequence is DNA-directed RNA polymerase subunit Rpo5 (78 aa).

This sequence belongs to the archaeal Rpo5/eukaryotic RPB5 RNA polymerase subunit family. In terms of assembly, part of the RNA polymerase complex.

It localises to the cytoplasm. The enzyme catalyses RNA(n) + a ribonucleoside 5'-triphosphate = RNA(n+1) + diphosphate. In terms of biological role, DNA-dependent RNA polymerase (RNAP) catalyzes the transcription of DNA into RNA using the four ribonucleoside triphosphates as substrates. The sequence is that of DNA-directed RNA polymerase subunit Rpo5 from Methanococcus vannielii (strain ATCC 35089 / DSM 1224 / JCM 13029 / OCM 148 / SB).